Here is a 165-residue protein sequence, read N- to C-terminus: Ureidoglycolate lyase (165 aa).

The protein belongs to the ureidoglycolate lyase family. In terms of assembly, homodimer. The cofactor is Ni(2+).

It catalyses the reaction (S)-ureidoglycolate = urea + glyoxylate. It functions in the pathway nitrogen metabolism; (S)-allantoin degradation. Its function is as follows. Catalyzes the catabolism of the allantoin degradation intermediate (S)-ureidoglycolate, generating urea and glyoxylate. Involved in the utilization of allantoin as nitrogen source. In Chelativorans sp. (strain BNC1), this protein is Ureidoglycolate lyase.